We begin with the raw amino-acid sequence, 409 residues long: Microfibrillar-associated protein 3-like (409 aa).

Positions 1–28 are cleaved as a signal peptide; sequence MGLLKSHLTVCLPPSVPFLILVSTLATA. At 29-148 the chain is on the extracellular side; it reads KSVTNSTLNG…TLRVIFTSGD (120 aa). Asn-33, Asn-37, Asn-67, Asn-111, and Asn-135 each carry an N-linked (GlcNAc...) asparagine glycan. The region spanning 47 to 141 is the Ig-like C2-type domain; the sequence is PVIIARTDHI…GTINNTVTLR (95 aa). The cysteines at positions 68 and 125 are disulfide-linked. A helical transmembrane segment spans residues 149-169; that stretch reads MGVYYMVVCLVAFTIVMILNI. Over 170 to 409 the chain is Cytoplasmic; that stretch reads TRLCMMSSHL…NTCIIYESHV (240 aa). Tyr-287 is modified (phosphotyrosine). Phosphoserine occurs at positions 298, 303, 306, and 307. A disordered region spans residues 319–392; it reads VSVHPQSKKD…LPPAHLETTE (74 aa). Positions 333-348 are enriched in acidic residues; that stretch reads QEGENLEVKDEEETEP. Positions 362-372 are enriched in polar residues; the sequence is DITTTELTSEE.

It localises to the cell membrane. Its subcellular location is the nucleus. The protein localises to the cytoplasm. May participate in the nuclear signaling of EGFR and MAPK1/ERK2. This chain is Microfibrillar-associated protein 3-like (Mfap3l), found in Rattus norvegicus (Rat).